A 215-amino-acid chain; its full sequence is MDRKELQVKERTVTRKSEVKKLRTNNEIPAVLYGKNIESKKLSIEKRELLDALSTAAGDNVLLDLKLDNGESYPAIFKEIQKDPIKGFFIHIDFHTIDLKETLQVSVPLNIEGEPVGVENGGIPQYQLREIEIECLPTQIPDHIEVDVSNIDLNESINVGDLPLPEGSELVTEPEETVMSVVAPETEEEPDTEEDEEGEEDVEEESEEEEEESEE.

Positions 160–215 are disordered; that stretch reads GDLPLPEGSELVTEPEETVMSVVAPETEEEPDTEEDEEGEEDVEEESEEEEEESEE. A compositionally biased stretch (acidic residues) spans 185–215; that stretch reads ETEEEPDTEEDEEGEEDVEEESEEEEEESEE.

The protein belongs to the bacterial ribosomal protein bL25 family. CTC subfamily. As to quaternary structure, part of the 50S ribosomal subunit; part of the 5S rRNA/L5/L18/L25 subcomplex. Contacts the 5S rRNA. Binds to the 5S rRNA independently of L5 and L18.

Its function is as follows. This is one of the proteins that binds to the 5S RNA in the ribosome where it forms part of the central protuberance. The sequence is that of Large ribosomal subunit protein bL25 from Natranaerobius thermophilus (strain ATCC BAA-1301 / DSM 18059 / JW/NM-WN-LF).